A 152-amino-acid chain; its full sequence is Mitochondrial fission 1 protein (152 aa).

The residue at position 1 (Met1) is an N-acetylmethionine. Residues Met1–Gly122 are Cytoplasmic-facing. The residue at position 10 (Ser10) is a Phosphoserine. The stretch at Arg71–Asn104 is one TPR repeat. The helical transmembrane segment at Leu123 to Ile143 threads the bilayer. Topologically, residues Gly144 to Ser152 are mitochondrial intermembrane.

It belongs to the FIS1 family. In terms of assembly, interacts with DNM1L/DLP1 through the TPR region; may form part of a larger protein complex at the endoplasmic reticulum-mitochondrial interface during mitochondrial fission. Interacts with MARCHF5. Interacts with MIEF1. Interacts with PEX11A, PEX11B and PEX11G. Post-translationally, ubiquitinated by MARCHF5.

Its subcellular location is the mitochondrion outer membrane. It localises to the peroxisome membrane. Involved in the fragmentation of the mitochondrial network and its perinuclear clustering. Plays a minor role in the recruitment and association of the fission mediator dynamin-related protein 1 (DNM1L) to the mitochondrial surface and mitochondrial fission. May not be essential for the assembly of functional fission complexes and the subsequent membrane scission event. Also mediates peroxisomal fission. May act when the products of fission are directed toward mitochondrial homeostasis, mitophagy, or apoptosis. Can induce cytochrome c release from the mitochondrion to the cytosol, ultimately leading to apoptosis. The chain is Mitochondrial fission 1 protein from Rattus norvegicus (Rat).